A 322-amino-acid chain; its full sequence is Probable cell division protein WhiA (322 aa).

Residues 279–312 (SLKELGELWTPPVGKSGVNHRIRKIERLAEKLRS) constitute a DNA-binding region (H-T-H motif).

The protein belongs to the WhiA family.

Its function is as follows. Involved in cell division and chromosome segregation. This Desulforamulus reducens (strain ATCC BAA-1160 / DSM 100696 / MI-1) (Desulfotomaculum reducens) protein is Probable cell division protein WhiA.